A 566-amino-acid polypeptide reads, in one-letter code: Phosphatidylinositol 4-kinase gamma 4 (566 aa).

Ubiquitin-like domains are found at residues T34 to Q111 and V112 to R190. Over residues D250–E263 the composition is skewed to polar residues. Residues D250–Q272 are disordered. Residues G255–A547 enclose the PI3K/PI4K catalytic domain. The interval S261 to G267 is G-loop. Residues S262 to A268, K284, and Q374 to T377 contribute to the ATP site. Residues A407–N415 are catalytic loop. The segment at P430–K456 is activation loop. D432 contributes to the ATP binding site.

It belongs to the PI3/PI4-kinase family. Type II PI4K subfamily. Interacts with RPN10, UFD1 and CDC48 in vitro. Post-translationally, autophosphorylated.

The protein resides in the membrane. It carries out the reaction a 1,2-diacyl-sn-glycero-3-phospho-(1D-myo-inositol) + ATP = a 1,2-diacyl-sn-glycero-3-phospho-(1D-myo-inositol 4-phosphate) + ADP + H(+). Functionally, the phosphorylation of phosphatidylinositol (PI) to PI4P is the first committed step in the generation of phosphatidylinositol 4,5-bisphosphate (PIP2), a precursor of the second messenger inositol 1,4,5-trisphosphate (InsP3). Undergoes autophosphorylation and phosphorylates serine/threonine residues of protein substrates. Phosphorylates RPN10 and UFD1 in vitro. The chain is Phosphatidylinositol 4-kinase gamma 4 from Arabidopsis thaliana (Mouse-ear cress).